The sequence spans 55 residues: Large ribosomal subunit protein bL32c (55 aa).

This sequence belongs to the bacterial ribosomal protein bL32 family.

Its subcellular location is the plastid. It is found in the chloroplast. The sequence is that of Large ribosomal subunit protein bL32c from Atropa belladonna (Belladonna).